The sequence spans 492 residues: Ketol-acid reductoisomerase (NADP(+)) (492 aa).

Residues 14–208 (LDQLGKCRFM…GGHRAGVLQS (195 aa)) form the KARI N-terminal Rossmann domain. NADP(+)-binding positions include 45–48 (CGAQ), arginine 68, arginine 76, serine 78, and 108–110 (DKQ). Histidine 132 is an active-site residue. An NADP(+)-binding site is contributed by glycine 158. 2 consecutive KARI C-terminal knotted domains span residues 209-344 (SFVA…NAPQ) and 345-485 (FDGK…MKDM). Residues aspartate 217, glutamate 221, glutamate 389, and glutamate 393 each contribute to the Mg(2+) site. Serine 414 is a binding site for substrate.

The protein belongs to the ketol-acid reductoisomerase family. It depends on Mg(2+) as a cofactor.

The enzyme catalyses (2R)-2,3-dihydroxy-3-methylbutanoate + NADP(+) = (2S)-2-acetolactate + NADPH + H(+). The catalysed reaction is (2R,3R)-2,3-dihydroxy-3-methylpentanoate + NADP(+) = (S)-2-ethyl-2-hydroxy-3-oxobutanoate + NADPH + H(+). It functions in the pathway amino-acid biosynthesis; L-isoleucine biosynthesis; L-isoleucine from 2-oxobutanoate: step 2/4. The protein operates within amino-acid biosynthesis; L-valine biosynthesis; L-valine from pyruvate: step 2/4. Its function is as follows. Involved in the biosynthesis of branched-chain amino acids (BCAA). Catalyzes an alkyl-migration followed by a ketol-acid reduction of (S)-2-acetolactate (S2AL) to yield (R)-2,3-dihydroxy-isovalerate. In the isomerase reaction, S2AL is rearranged via a Mg-dependent methyl migration to produce 3-hydroxy-3-methyl-2-ketobutyrate (HMKB). In the reductase reaction, this 2-ketoacid undergoes a metal-dependent reduction by NADPH to yield (R)-2,3-dihydroxy-isovalerate. This is Ketol-acid reductoisomerase (NADP(+)) from Pectobacterium atrosepticum (strain SCRI 1043 / ATCC BAA-672) (Erwinia carotovora subsp. atroseptica).